A 171-amino-acid chain; its full sequence is Transcriptional repressor NrdR (171 aa).

The tract at residues 1–21 (MQCPHCQHTDSRVLESRSSEN) is disordered. A zinc finger lies at 3–34 (CPHCQHTDSRVLESRSSENGQSIRRRRECLQC). Over residues 7 to 18 (QHTDSRVLESRS) the composition is skewed to basic and acidic residues. The ATP-cone domain maps to 49–139 (ITVIKKDGKR…VYGNFQGIRD (91 aa)).

The protein belongs to the NrdR family. It depends on Zn(2+) as a cofactor.

Its function is as follows. Negatively regulates transcription of bacterial ribonucleotide reductase nrd genes and operons by binding to NrdR-boxes. In Microcystis aeruginosa (strain NIES-843 / IAM M-2473), this protein is Transcriptional repressor NrdR.